Reading from the N-terminus, the 108-residue chain is Large ribosomal subunit protein P2A (108 aa).

Residues 62-108 (LSSVPSGAPAAAAGGASAAAGGEATEEAAEEEAAEESDDDMSFGLFD) form a disordered region. Residues 68–84 (GAPAAAAGGASAAAGGE) show a composition bias toward low complexity. Acidic residues predominate over residues 85–102 (ATEEAAEEEAAEESDDDM). Ser-98 carries the phosphoserine modification.

This sequence belongs to the eukaryotic ribosomal protein P1/P2 family.

Plays an important role in the elongation step of protein synthesis. This is Large ribosomal subunit protein P2A (RPP2A) from Candida albicans (Yeast).